Reading from the N-terminus, the 1042-residue chain is Protein phosphatase Slingshot homolog 1 (1042 aa).

The segment covering 1–12 has biased composition (polar residues); that stretch reads MALVTLQRSPTP. The disordered stretch occupies residues 1-29; the sequence is MALVTLQRSPTPSAASSSASNSELEAGSD. At A2 the chain carries N-acetylalanine. Residues 13–22 show a composition bias toward low complexity; the sequence is SAASSSASNS. Phosphoserine is present on residues S37 and S57. The 56-residue stretch at 249–304 folds into the DEK-C domain; it reads ERTERLIKAKLRSIMMSQDLENVTSKEIRNELEKQMNCNLKEFKEFIDNEMLLILG. The Tyrosine-protein phosphatase domain maps to 308-449; sequence KPSLIFDHLY…LSEYEGILDA (142 aa). The active-site Phosphocysteine intermediate is C393. S516 carries the post-translational modification Phosphoserine. Disordered stretches follow at residues 576 to 609, 668 to 766, 858 to 900, and 915 to 942; these read FGNSKPRSDSLPQVEELEKDGSPRTGRWRRASTQ, MERH…PHCD, IPEE…LDHT, and PTSSSISSNLTRSSSSDSIHSVRGKPGL. A compositionally biased stretch (polar residues) spans 675 to 693; the sequence is SSSAICTQPTFLPHVTSSP. Positions 697 to 712 are enriched in low complexity; it reads ASSRSRAPERPASGPA. Polar residues predominate over residues 886 to 900; sequence LQKSPTSTLPRLDHT. The residue at position 889 (S889) is a Phosphoserine. The interaction with YWHAG stretch occupies residues 889–1042; the sequence is SPTSTLPRLD…LKSPSRVNKS (154 aa). Low complexity predominate over residues 917-935; sequence SSSISSNLTRSSSSDSIHS. Phosphoserine is present on S970. The segment covering 985–995 has biased composition (polar residues); the sequence is SSEADTSTIAD. Residues 985 to 1042 are disordered; it reads SSEADTSTIADSQDAKCGLSSSFLPEPQSAPRDPAATSKSSGKSAPEHLKSPSRVNKS.

This sequence belongs to the protein-tyrosine phosphatase family. Interacts with the 14-3-3 proteins YWHAB, YWHAG, YWHAQ, and YWHAZ. Interaction with 14-3-3 proteins inhibits phosphatase activity and also blocks recruitment to lamellipodia and stimulation by actin. Interacts with actin and this stimulates phosphatase activity. Interacts with LIMK1. In terms of processing, phosphorylated. Inhibitory phosphorylation by PAK4 promotes binding to YWHAZ. Phosphorylation at Ser-970 is decreased by stimuli which promote actin reorganization and lamellipodia formation. Can be dephosphorylated and activated by PPP3CA/calcineurin A. Phosphorylation decreases immediately prior to telophase. In terms of tissue distribution, expressed in brain, heart, kidney and thymus. Also expressed at lower levels in liver, skeletal muscle, small intestine and spleen.

It is found in the cytoplasm. It localises to the cytoskeleton. The protein resides in the cleavage furrow. The protein localises to the midbody. The catalysed reaction is O-phospho-L-tyrosyl-[protein] + H2O = L-tyrosyl-[protein] + phosphate. It catalyses the reaction O-phospho-L-seryl-[protein] + H2O = L-seryl-[protein] + phosphate. The enzyme catalyses O-phospho-L-threonyl-[protein] + H2O = L-threonyl-[protein] + phosphate. Protein phosphatase which regulates actin filament dynamics. Dephosphorylates and activates the actin binding/depolymerizing factor cofilin, which subsequently binds to actin filaments and stimulates their disassembly. Inhibitory phosphorylation of cofilin is mediated by LIMK1, which may also be dephosphorylated and inactivated by this protein. The protein is Protein phosphatase Slingshot homolog 1 of Mus musculus (Mouse).